A 605-amino-acid polypeptide reads, in one-letter code: Aspartate--tRNA(Asp/Asn) ligase (605 aa).

An L-aspartate-binding site is contributed by glutamate 172. The segment at 196 to 199 is aspartate; sequence QLFK. Position 218 (arginine 218) interacts with L-aspartate. Residues 218–220 and glutamine 227 each bind ATP; that span reads RDE. Histidine 455 is an L-aspartate binding site. An ATP-binding site is contributed by glutamate 489. An L-aspartate-binding site is contributed by arginine 496. 541-544 provides a ligand contact to ATP; that stretch reads GLDR.

The protein belongs to the class-II aminoacyl-tRNA synthetase family. Type 1 subfamily. In terms of assembly, homodimer.

The protein resides in the cytoplasm. The catalysed reaction is tRNA(Asx) + L-aspartate + ATP = L-aspartyl-tRNA(Asx) + AMP + diphosphate. Functionally, aspartyl-tRNA synthetase with relaxed tRNA specificity since it is able to aspartylate not only its cognate tRNA(Asp) but also tRNA(Asn). Reaction proceeds in two steps: L-aspartate is first activated by ATP to form Asp-AMP and then transferred to the acceptor end of tRNA(Asp/Asn). This is Aspartate--tRNA(Asp/Asn) ligase from Ralstonia nicotianae (strain ATCC BAA-1114 / GMI1000) (Ralstonia solanacearum).